Consider the following 732-residue polypeptide: Catalase-peroxidase (732 aa).

The tract at residues 1–29 is disordered; sequence MTTESKCPFSGGGKPNTPRRGPSNQDWWP. Residues 96 to 223 constitute a cross-link (tryptophyl-tyrosyl-methioninium (Trp-Tyr) (with M-249)); it reads WHSAGTYRIG…LAAVQMGLIY (128 aa). His97 serves as the catalytic Proton acceptor. The segment at residues 223–249 is a cross-link (tryptophyl-tyrosyl-methioninium (Tyr-Met) (with W-96)); it reads YVNPEGPDGNPDPVAAARDIRETFARM. Heme b is bound at residue His264.

The protein belongs to the peroxidase family. Peroxidase/catalase subfamily. In terms of assembly, homodimer or homotetramer. Heme b serves as cofactor. Post-translationally, formation of the three residue Trp-Tyr-Met cross-link is important for the catalase, but not the peroxidase activity of the enzyme.

The catalysed reaction is H2O2 + AH2 = A + 2 H2O. It carries out the reaction 2 H2O2 = O2 + 2 H2O. Functionally, bifunctional enzyme with both catalase and broad-spectrum peroxidase activity. The chain is Catalase-peroxidase from Serratia proteamaculans (strain 568).